A 146-amino-acid chain; its full sequence is Cyanate hydratase (146 aa).

Active-site residues include arginine 87, glutamate 90, and serine 113.

The protein belongs to the cyanase family.

The enzyme catalyses cyanate + hydrogencarbonate + 3 H(+) = NH4(+) + 2 CO2. Its function is as follows. Catalyzes the reaction of cyanate with bicarbonate to produce ammonia and carbon dioxide. This chain is Cyanate hydratase, found in Trichormus variabilis (strain ATCC 29413 / PCC 7937) (Anabaena variabilis).